The following is a 240-amino-acid chain: Phosphoribosylaminoimidazole-succinocarboxamide synthase (240 aa).

Belongs to the SAICAR synthetase family.

The catalysed reaction is 5-amino-1-(5-phospho-D-ribosyl)imidazole-4-carboxylate + L-aspartate + ATP = (2S)-2-[5-amino-1-(5-phospho-beta-D-ribosyl)imidazole-4-carboxamido]succinate + ADP + phosphate + 2 H(+). It participates in purine metabolism; IMP biosynthesis via de novo pathway; 5-amino-1-(5-phospho-D-ribosyl)imidazole-4-carboxamide from 5-amino-1-(5-phospho-D-ribosyl)imidazole-4-carboxylate: step 1/2. This chain is Phosphoribosylaminoimidazole-succinocarboxamide synthase, found in Wolbachia pipientis subsp. Culex pipiens (strain wPip).